The primary structure comprises 180 residues: Protein GrpE (180 aa).

Residues 1 to 25 (MSKKKAEDKQPIIKDEAVEEPKSDS) form a disordered region.

This sequence belongs to the GrpE family. In terms of assembly, homodimer.

The protein localises to the cytoplasm. Its function is as follows. Participates actively in the response to hyperosmotic and heat shock by preventing the aggregation of stress-denatured proteins, in association with DnaK and GrpE. It is the nucleotide exchange factor for DnaK and may function as a thermosensor. Unfolded proteins bind initially to DnaJ; upon interaction with the DnaJ-bound protein, DnaK hydrolyzes its bound ATP, resulting in the formation of a stable complex. GrpE releases ADP from DnaK; ATP binding to DnaK triggers the release of the substrate protein, thus completing the reaction cycle. Several rounds of ATP-dependent interactions between DnaJ, DnaK and GrpE are required for fully efficient folding. This is Protein GrpE from Fructilactobacillus sanfranciscensis (Lactobacillus sanfranciscensis).